Consider the following 211-residue polypeptide: Prolactin (211 aa).

The N-terminal stretch at 1-24 is a signal peptide; sequence MTHRRTKLFMMAAVVSYVMTSCGA. 2 disulfide bridges follow: cysteine 70–cysteine 184 and cysteine 201–cysteine 211.

Belongs to the somatotropin/prolactin family.

It localises to the secreted. This Paralichthys olivaceus (Bastard halibut) protein is Prolactin (prl).